Reading from the N-terminus, the 184-residue chain is Tumor necrosis factor alpha-induced protein 8-like protein 2 (184 aa).

Phosphoserine is present on serine 3.

The protein belongs to the TNFAIP8 family. TNFAIP8L2 subfamily. As to quaternary structure, may interact with CASP8; however, such result is unclear since could not reproduce the interaction with CASP8. Interacts with RAC1. In terms of processing, phosphorylated by TAK1/MAP3K7; this phosphorylation triggers association with BTRC and subsequent ubiquitination and degradation. Post-translationally, ubiquitinated in a BTRC-depdent manner; leading to degradation mediated through the proteasome pathway.

It localises to the cytoplasm. It is found in the nucleus. The protein resides in the lysosome. Functionally, acts as a negative regulator of innate and adaptive immunity by maintaining immune homeostasis. Plays a regulatory role in the Toll-like signaling pathway by determining the strength of LPS-induced signaling and gene expression. Inhibits TCR-mediated T-cell activation and negatively regulate T-cell function to prevent hyperresponsiveness. Also inhibits autolysosome formation via negatively modulating MTOR activation by interacting with RAC1 and promoting the disassociation of the RAC1-MTOR complex. Plays an essential role in NK-cell biology by acting as a checkpoint and displaying an expression pattern correlating with NK-cell maturation process and by negatively regulating NK-cell maturation and antitumor immunity. Mechanistically, suppresses IL-15-triggered mTOR activity in NK-cells. The protein is Tumor necrosis factor alpha-induced protein 8-like protein 2 (TNFAIP8L2) of Oryctolagus cuniculus (Rabbit).